The following is a 1001-amino-acid chain: Integrator complex subunit 7 (1001 aa).

Residues 980–1001 are disordered; it reads DPSKQGAPAPSTSQAVGQTRRF. Polar residues predominate over residues 989 to 1001; that stretch reads PSTSQAVGQTRRF.

This sequence belongs to the Integrator subunit 7 family. As to quaternary structure, belongs to the multiprotein complex Integrator, at least composed of IntS1, IntS2, IntS3, IntS4, omd/IntS5, IntS6, defl/IntS7, IntS8, IntS9, IntS10, IntS11, IntS12, asun/IntS13, IntS14 and IntS15. The core complex associates with protein phosphatase 2A subunits mts/PP2A and Pp2A-29B, to form the Integrator-PP2A (INTAC) complex.

It localises to the nucleus. The protein resides in the cytoplasm. Component of the integrator complex, a multiprotein complex that terminates RNA polymerase II (Pol II) transcription in the promoter-proximal region of genes. The integrator complex provides a quality checkpoint during transcription elongation by driving premature transcription termination of transcripts that are unfavorably configured for transcriptional elongation: the complex terminates transcription by (1) catalyzing dephosphorylation of the C-terminal domain (CTD) of Pol II subunit Polr2A/Rbp1 and Spt5, and (2) degrading the exiting nascent RNA transcript via endonuclease activity. The integrator complex is also involved in the 3'-end processing of the U7 snRNA, and also the spliceosomal snRNAs U1, U2, U4 and U5. This is Integrator complex subunit 7 from Drosophila melanogaster (Fruit fly).